The following is a 54-amino-acid chain: Sperm protamine P3 (54 aa).

A disordered region spans residues 1-54 (RRRRRRGKGKGGKKKKGKKRRRRGRKGKGKGKKKGKRKGKRGGKRRRRRRKGKK).

As to expression, gonads.

It localises to the nucleus. The protein localises to the chromosome. In terms of biological role, protamines substitute for histones in the chromatin of sperm during the haploid phase of spermatogenesis. They compact sperm DNA into a highly condensed, stable and inactive complex. This chain is Sperm protamine P3, found in Bolinus brandaris (Purple dye murex).